We begin with the raw amino-acid sequence, 293 residues long: Protease HtpX (293 aa).

2 helical membrane passes run 4 to 24 and 34 to 54; these read IALFLLTNLAVMVVFGLVLSL and GLLIMALLFGFGGSFISLLMS. Residue histidine 139 coordinates Zn(2+). The active site involves glutamate 140. Histidine 143 lines the Zn(2+) pocket. The next 2 helical transmembrane spans lie at 158-178 and 193-213; these read VVNTFVIFISRIIAQIAAGFL and LIYFAVATVLELVFGILASII. Glutamate 222 lines the Zn(2+) pocket.

It belongs to the peptidase M48B family. Zn(2+) is required as a cofactor.

The protein localises to the cell inner membrane. The chain is Protease HtpX from Salmonella agona (strain SL483).